Consider the following 532-residue polypeptide: Telomerase Cajal body protein 1 (532 aa).

A disordered region spans residues 1-48 (MKTSEELRLAPDSLPSDLVPAPVLQASPADKNTDSEPVPPPCGGDDQL). Phosphoserine is present on residues serine 27, serine 61, and serine 83. The disordered stretch occupies residues 83-115 (SPRIEEQEVPENASLPVEETNRPELESGEAMEG). WD repeat units lie at residues 151–190 (RSENFLKGCKWAPDGSCILTNSADNVLRIYNLPPELYSES), 206–251 (EGDT…LRAS), 256–297 (NHLD…RDCE), 307–348 (GQSG…ALLG), 349–389 (GHQG…HLLW), and 395–434 (VTTNQRIYFDLDPSGQFLVSGNTSGVVSVWDISGAFSDCK). Threonine 474 carries the post-translational modification Phosphothreonine. Phosphoserine is present on serine 476. Residues 505 to 532 (CGGGPDPSNPDEDQDEKGQGRTEAVGMS) form a disordered region.

It belongs to the TCAB1 family. Component of the telomerase holoenzyme complex composed of one molecule of TERT, one molecule of WRAP53/TCAB1, two molecules of H/ACA ribonucleoprotein complex subunits DKC1, NOP10, NHP2 and GAR1, and a telomerase RNA template component (TERC). The telomerase holoenzyme complex is associated with TEP1, SMG6/EST1A and POT1. Interacts with the chaperonin-containing T-complex (TRiC) complex; which mediates the folding of WRAP53/TCAB1. Interacts with COIL. Interacts with SMN1. Interacts with RNF8. Interacts with histone H2AX. Post-translationally, phosphorylated at Ser-61 by ATM in response to DNA damage, promoting its interaction with histone H2AX and localization to sites of DNA double-strand breaks.

It localises to the nucleus. The protein localises to the cajal body. The protein resides in the chromosome. Its subcellular location is the telomere. Functionally, RNA chaperone that plays a key role in telomere maintenance and RNA localization to Cajal bodies. Specifically recognizes and binds the Cajal body box (CAB box) present in both small Cajal body RNAs (scaRNAs) and telomerase RNA template component (TERC). Essential component of the telomerase holoenzyme complex, a ribonucleoprotein complex essential for the replication of chromosome termini that elongates telomeres in most eukaryotes. In the telomerase holoenzyme complex, required to stimulate the catalytic activity of the complex. Acts by specifically binding the CAB box of the TERC RNA and controlling the folding of the CR4/CR5 region of the TERC RNA, a critical step for telomerase activity. In addition, also controls telomerase holoenzyme complex localization to Cajal body. During S phase, required for delivery of TERC to telomeres during S phase and for telomerase activity. In addition to its role in telomere maintenance, also required for Cajal body formation, probably by mediating localization of scaRNAs to Cajal bodies. Also plays a role in DNA repair: phosphorylated by ATM in response to DNA damage and relocalizes to sites of DNA double-strand breaks to promote the repair of DNA double-strand breaks. Acts by recruiting the ubiquitin ligase RNF8 to DNA breaks and promote both homologous recombination (HR) and non-homologous end joining (NHEJ). This chain is Telomerase Cajal body protein 1, found in Rattus norvegicus (Rat).